The chain runs to 229 residues: Large ribosomal subunit protein uL4 (229 aa).

The segment at serine 62–valine 103 is disordered. Positions lysine 82–arginine 97 are enriched in basic residues.

The protein belongs to the universal ribosomal protein uL4 family. Part of the 50S ribosomal subunit.

One of the primary rRNA binding proteins, this protein initially binds near the 5'-end of the 23S rRNA. It is important during the early stages of 50S assembly. It makes multiple contacts with different domains of the 23S rRNA in the assembled 50S subunit and ribosome. In terms of biological role, forms part of the polypeptide exit tunnel. This Mycoplasmopsis synoviae (strain 53) (Mycoplasma synoviae) protein is Large ribosomal subunit protein uL4.